Here is a 360-residue protein sequence, read N- to C-terminus: Metalloendoproteinase 5-MMP (360 aa).

Residues 1–20 (MRTLLLTILIFFFTVNPISA) form the signal peptide. Positions 21–142 (KFYTNVSSIP…GGKILRTTEK (122 aa)) are cleaved as a propeptide — activation peptide. 3 N-linked (GlcNAc...) asparagine glycosylation sites follow: Asn-25, Asn-36, and Asn-78. The Cysteine switch motif lies at 117–124 (PRCGNPDL). Residue Cys-119 coordinates Zn(2+). Asn-168 and Asn-191 each carry an N-linked (GlcNAc...) asparagine glycan. Residue His-270 coordinates Zn(2+). Residue Glu-271 is part of the active site. Positions 274 and 280 each coordinate Zn(2+). A disordered region spans residues 312–336 (LYGGNPNGDGGGSKPSRESQSTGGD). Ser-337 is lipidated: GPI-anchor amidated serine. The propeptide at 338 to 360 (VRRWRGWMISLSSIATCIFLISV) is removed in mature form.

It belongs to the peptidase M10A family. Matrix metalloproteinases (MMPs) subfamily. The cofactor is Zn(2+). Mostly expressed in leaves, roots and stems, and, to a lower extent, in flowers.

Its subcellular location is the cell membrane. Its activity is regulated as follows. Repressed by acetohydroxamic acid (AHA). Functionally, matrix metalloproteinases (MMPs) or matrixins may play a role in the degradation and remodeling of the extracellular matrix (ECM) during development or in response to stresses. Active on Mca-KESAbuNLFVLKDpaR-NH(2) (QF75) and, to some extent, on McaPLGLDpaAR-NH(2) (QF24), myelin basic protein (MBP) and beta-casein. In Arabidopsis thaliana (Mouse-ear cress), this protein is Metalloendoproteinase 5-MMP.